Reading from the N-terminus, the 156-residue chain is Low-salt glycan biosynthesis protein Agl8 (156 aa).

Residues 14 to 15 and Arg47 each bind substrate; that span reads RI. The Nudix hydrolase domain occupies 25-156; sequence ANVPLVSVDL…YVERYLDALD (132 aa). Gly60, Glu80, and Gln130 together coordinate Mg(2+). Positions 61–82 match the Nudix box motif; sequence GTVFKNETLTDALYRVADEELG.

It belongs to the Nudix hydrolase family. The cofactor is Mg(2+).

Its pathway is protein modification; protein glycosylation. The protein operates within cell surface structure biogenesis; S-layer biogenesis. In terms of biological role, nudix hydrolase involved in N-glycan biosynthetic pathway that takes place under low-salt conditions (1.75 M instead of 3.4 M). Participates in the formation of the tetrasaccharide present at 'Asn-532' of S-layer glycoprotein Csg, consisting of a sulfated hexose, 2 hexoses and rhamnose. Mediates attachment of sugar 3 in the tetrasaccharide. The protein is Low-salt glycan biosynthesis protein Agl8 (agl8) of Haloferax volcanii (strain ATCC 29605 / DSM 3757 / JCM 8879 / NBRC 14742 / NCIMB 2012 / VKM B-1768 / DS2) (Halobacterium volcanii).